A 76-amino-acid polypeptide reads, in one-letter code: Senegalin (76 aa).

Positions 1 to 22 (MLSLKKSMLLLFFLGMVSFSLA) are cleaved as a signal peptide. Positions 23–55 (NKRSDGKRADEEGEDKRADEEGEDKRADEEGED) are excised as a propeptide. A disordered region spans residues 24–54 (KRSDGKRADEEGEDKRADEEGEDKRADEEGE). Leu75 bears the Leucine amide mark.

In terms of tissue distribution, expressed by the skin glands.

It is found in the secreted. In terms of biological role, antimicrobial peptide with activity against the Gram-positive bacterium S.aureus NCTC 10788 (MIC=50 um) and the yeast C.albicans NCPF 1467 (MIC=150 uM). Ineffective against the Gram-negative bacterium E.coli NCTC 10418. Induces a dose-dependent contraction of rat urinary bladder smooth muscle (EC50=2.9 nM) and a dose-dependent relaxation of rat tail artery smooth muscle (EC50=37.7 nM). In Kassina senegalensis (Senegal running frog), this protein is Senegalin.